The following is a 547-amino-acid chain: Chaperonin GroEL (547 aa).

ATP contacts are provided by residues 30–33 (TLGP), lysine 51, 87–91 (DGTTT), glycine 415, 480–482 (NAA), and aspartate 496.

It belongs to the chaperonin (HSP60) family. As to quaternary structure, forms a cylinder of 14 subunits composed of two heptameric rings stacked back-to-back. Interacts with the co-chaperonin GroES.

It is found in the cytoplasm. The enzyme catalyses ATP + H2O + a folded polypeptide = ADP + phosphate + an unfolded polypeptide.. Together with its co-chaperonin GroES, plays an essential role in assisting protein folding. The GroEL-GroES system forms a nano-cage that allows encapsulation of the non-native substrate proteins and provides a physical environment optimized to promote and accelerate protein folding. The polypeptide is Chaperonin GroEL (Glaesserella parasuis serovar 5 (strain SH0165) (Haemophilus parasuis)).